Reading from the N-terminus, the 1467-residue chain is Helicase ARIP4 (1467 aa).

2 disordered regions span residues 1–150 (MSDE…YAAP) and 186–234 (DSSS…GGTH). Residues 11–49 (PDLDPDVELEDAEEEEEEEEVAVEECDRDDEEDLLDDPS) are compositionally biased toward acidic residues. The segment covering 72–82 (TSTTSSQSEPS) has biased composition (low complexity). The segment covering 100–115 (KKRAQKPSHMRRNIRK) has biased composition (basic residues). Residues Lys115 and Lys127 each participate in a glycyl lysine isopeptide (Lys-Gly) (interchain with G-Cter in SUMO2) cross-link. Basic and acidic residues-rich tracts occupy residues 133 to 147 (ELERRKRLEQQRKDY) and 192 to 201 (EDEKSSRDEV). Lys272 participates in a covalent cross-link: Glycyl lysine isopeptide (Lys-Gly) (interchain with G-Cter in SUMO2). The region spanning 292-512 (RFKTSSGFGC…WCMVDFVRPD (221 aa)) is the Helicase ATP-binding domain. 305–312 (HSMGLGKT) provides a ligand contact to ATP. The short motif at 463–466 (DEGH) is the DEAH box element. The short motif at 551–555 (LHSLL) is the LXXLL motif 1 element. Positions 649–673 (GSAGTSARCPPQGTKGKGEDSTLAS) are disordered. Glycyl lysine isopeptide (Lys-Gly) (interchain with G-Cter in SUMO2) cross-links involve residues Lys665, Lys682, Lys759, Lys901, Lys1014, and Lys1018. The Helicase C-terminal domain occupies 728 to 896 (HLIEESVKLG…RVVDDLNPML (169 aa)). The tract at residues 1120-1171 (RATGKPKVPEDGRMAASGSQGPSCESTSNGRHSASSPKAPDPEGLARPVSPD) is disordered. The span at 1136–1155 (SGSQGPSCESTSNGRHSASS) shows a compositional bias: polar residues. Phosphoserine is present on residues Ser1169 and Ser1172. 2 disordered regions span residues 1184–1221 (DVAAARESRQSSPSTNAALPGPPAQLMDSSAVPGTALG) and 1247–1284 (PVLDLRGHKRKLATPPAAQESSRRRSRKGHLPAPVQPY). Thr1260 bears the Phosphothreonine mark. The short motif at 1329–1333 (LSNLL) is the LXXLL motif 2 element. The interval 1445-1467 (AEVGFSSNDDEDKDDDVIEVTGK) is disordered. A compositionally biased stretch (acidic residues) spans 1452 to 1467 (NDDEDKDDDVIEVTGK).

This sequence belongs to the SNF2/RAD54 helicase family. In terms of assembly, interacts with AR via its N-terminus. Interacts with DYRK1A. Binds DNA and mononucleosomes, but does not seem to form large multiprotein complexes. Sumoylated.

It is found in the nucleus. The enzyme catalyses ATP + H2O = ADP + phosphate + H(+). Enzyme activity is enhanced by dsDNA (double-stranded DNA) and ssDNA (single-stranded DNA). Its function is as follows. DNA helicase that modulates androgen receptor (AR)-dependent transactivation in a promoter-dependent manner. Not able to remodel mononucleosomes in vitro. The chain is Helicase ARIP4 (RAD54L2) from Homo sapiens (Human).